We begin with the raw amino-acid sequence, 135 residues long: MNFLILFCVVASASVVYSSISDQCLRCICEVESGCRAIGCHWDVYSNSCGYFQIKQGYWTDCGSPGHSMESCADNYNCASGCVRSYMDHYIKYNGCADTCESYARMHNGGPNGCKSSHHHATDNYWRLVQAKGCS.

A signal peptide spans 1 to 18 (MNFLILFCVVASASVVYS). Residues 19–135 (SISDQCLRCI…WRLVQAKGCS (117 aa)) form the I-type lysozyme domain. Disulfide bonds link Cys-24–Cys-100, Cys-29–Cys-35, Cys-40–Cys-49, Cys-62–Cys-82, Cys-72–Cys-78, and Cys-96–Cys-114. The active-site Proton donor is the Glu-32. The active-site Nucleophile is Asp-43. Position 55-61 (55-61 (KQGYWTD)) interacts with substrate. Substrate contacts are provided by residues Tyr-86 and 107-109 (HNG).

As to expression, expressed in the epithelia of the basophil cells in the digestive tubules, but not in the epithelial cells lining the digestive ducts and stomach. Expressed at a much lower level in the style sac-midgut tissues. No expression detected in mantle, gills, labial palps or hemocytes.

It localises to the secreted. It catalyses the reaction Hydrolysis of (1-&gt;4)-beta-linkages between N-acetylmuramic acid and N-acetyl-D-glucosamine residues in a peptidoglycan and between N-acetyl-D-glucosamine residues in chitodextrins.. With respect to regulation, activity decreased by 80% by addition of 0.01 M calcium, zinc or magnesium. Activity only decreased by 17% by addition of ammonium, and by 2% by addition of sodium. Its function is as follows. The main role of this lysozyme is in digestion. Has antibacterial activity against the Gram-positive bacterium P.cerevisiae and the Gram-negative bacteria E.coli and V.vulnificus. Shows some chitinase activity but no isopeptidase activity. This Crassostrea virginica (Eastern oyster) protein is Lysozyme 2.